Consider the following 148-residue polypeptide: Cytochrome c-type biogenesis protein CcmE (148 aa).

Residues 1-7 lie on the Cytoplasmic side of the membrane; sequence MKARNKR. A helical; Signal-anchor for type II membrane protein transmembrane segment spans residues 8–28; it reads LMLVGGGIALLVAAAALVLSA. Residues 29 to 148 lie on the Periplasmic side of the membrane; that stretch reads FQQNLVFFHT…AHKTATTVQQ (120 aa). Positions 123 and 127 each coordinate heme.

This sequence belongs to the CcmE/CycJ family.

The protein resides in the cell inner membrane. Functionally, heme chaperone required for the biogenesis of c-type cytochromes. Transiently binds heme delivered by CcmC and transfers the heme to apo-cytochromes in a process facilitated by CcmF and CcmH. The sequence is that of Cytochrome c-type biogenesis protein CcmE from Azoarcus sp. (strain BH72).